A 226-amino-acid chain; its full sequence is Imidazole glycerol phosphate synthase subunit HisH (226 aa).

Positions 6–214 (NIALVDYGVG…VERAASRSAA (209 aa)) constitute a Glutamine amidotransferase type-1 domain. The Nucleophile role is filled by Cys84. Catalysis depends on residues His189 and Glu191.

In terms of assembly, heterodimer of HisH and HisF.

Its subcellular location is the cytoplasm. The enzyme catalyses 5-[(5-phospho-1-deoxy-D-ribulos-1-ylimino)methylamino]-1-(5-phospho-beta-D-ribosyl)imidazole-4-carboxamide + L-glutamine = D-erythro-1-(imidazol-4-yl)glycerol 3-phosphate + 5-amino-1-(5-phospho-beta-D-ribosyl)imidazole-4-carboxamide + L-glutamate + H(+). It carries out the reaction L-glutamine + H2O = L-glutamate + NH4(+). It participates in amino-acid biosynthesis; L-histidine biosynthesis; L-histidine from 5-phospho-alpha-D-ribose 1-diphosphate: step 5/9. In terms of biological role, IGPS catalyzes the conversion of PRFAR and glutamine to IGP, AICAR and glutamate. The HisH subunit catalyzes the hydrolysis of glutamine to glutamate and ammonia as part of the synthesis of IGP and AICAR. The resulting ammonia molecule is channeled to the active site of HisF. The polypeptide is Imidazole glycerol phosphate synthase subunit HisH (Gloeobacter violaceus (strain ATCC 29082 / PCC 7421)).